A 487-amino-acid chain; its full sequence is Protein nucleotidyltransferase YdiU (487 aa).

Residues glycine 90, glycine 92, arginine 93, lysine 113, aspartate 125, glycine 126, arginine 176, and arginine 183 each coordinate ATP. Residue aspartate 252 is the Proton acceptor of the active site. The Mg(2+) site is built by asparagine 253 and aspartate 262. Aspartate 262 is an ATP binding site.

The protein belongs to the SELO family. It depends on Mg(2+) as a cofactor. Mn(2+) serves as cofactor.

It carries out the reaction L-seryl-[protein] + ATP = 3-O-(5'-adenylyl)-L-seryl-[protein] + diphosphate. It catalyses the reaction L-threonyl-[protein] + ATP = 3-O-(5'-adenylyl)-L-threonyl-[protein] + diphosphate. The catalysed reaction is L-tyrosyl-[protein] + ATP = O-(5'-adenylyl)-L-tyrosyl-[protein] + diphosphate. The enzyme catalyses L-histidyl-[protein] + UTP = N(tele)-(5'-uridylyl)-L-histidyl-[protein] + diphosphate. It carries out the reaction L-seryl-[protein] + UTP = O-(5'-uridylyl)-L-seryl-[protein] + diphosphate. It catalyses the reaction L-tyrosyl-[protein] + UTP = O-(5'-uridylyl)-L-tyrosyl-[protein] + diphosphate. Nucleotidyltransferase involved in the post-translational modification of proteins. It can catalyze the addition of adenosine monophosphate (AMP) or uridine monophosphate (UMP) to a protein, resulting in modifications known as AMPylation and UMPylation. The chain is Protein nucleotidyltransferase YdiU from Pseudomonas syringae pv. tomato (strain ATCC BAA-871 / DC3000).